A 246-amino-acid polypeptide reads, in one-letter code: ABC transporter ATP-binding protein NatA (246 aa).

The ABC transporter domain maps to 2 to 237; sequence ITLTDCSRRF…ERSEDLNYIF (236 aa). Position 38-45 (38-45) interacts with ATP; the sequence is GENGAGKT.

It belongs to the ABC transporter superfamily. The complex is composed of NatA and NatB.

The catalysed reaction is Na(+)(in) + ATP + H2O = Na(+)(out) + ADP + phosphate + H(+). Its function is as follows. Part of an ABC transporter that catalyzes ATP-dependent electrogenic sodium extrusion. This chain is ABC transporter ATP-binding protein NatA, found in Bacillus subtilis (strain 168).